Here is a 105-residue protein sequence, read N- to C-terminus: uncharacterized protein (105 aa).

The N-terminal stretch at 1 to 24 is a signal peptide; that stretch reads MYWPCLVITPFTVGESFCLLLSLG.

This is an uncharacterized protein from Saccharomyces cerevisiae (strain ATCC 204508 / S288c) (Baker's yeast).